The chain runs to 115 residues: Phosphoribosyl-AMP cyclohydrolase (115 aa).

Residue D80 coordinates Mg(2+). C81 provides a ligand contact to Zn(2+). Mg(2+) contacts are provided by D82 and D84. Zn(2+)-binding residues include C97 and C104.

This sequence belongs to the PRA-CH family. As to quaternary structure, homodimer. The cofactor is Mg(2+). Requires Zn(2+) as cofactor.

The protein resides in the cytoplasm. The enzyme catalyses 1-(5-phospho-beta-D-ribosyl)-5'-AMP + H2O = 1-(5-phospho-beta-D-ribosyl)-5-[(5-phospho-beta-D-ribosylamino)methylideneamino]imidazole-4-carboxamide. The protein operates within amino-acid biosynthesis; L-histidine biosynthesis; L-histidine from 5-phospho-alpha-D-ribose 1-diphosphate: step 3/9. Its function is as follows. Catalyzes the hydrolysis of the adenine ring of phosphoribosyl-AMP. This Rhodococcus erythropolis (strain PR4 / NBRC 100887) protein is Phosphoribosyl-AMP cyclohydrolase.